We begin with the raw amino-acid sequence, 721 residues long: MNKLTIIVTYYNAEEYITGCLESIKQQRTQDFNLIIVNDGSTDQSKKLMDEAIKDYDKNIRFIDLDENSGHAHARNIALEEVETPYFMFLDADDELASYAITFYLEKFNNTDGLIAPIHSFTTQRPQFVDLDRVRVEYFNAKENINSFLRKQSACNIIFRTAIVRAHHIRFNENLNTYVDWSFVLEYMKYVNKFVRIFNFPFYFRGEVYDPFETLTLSEQNFDILFKDYVNSFYDAIKRATNPKVREFIVTKMGNKIANEFEPTRYDINERYQTHKDTLVELSKFLHVHLVKNQKLINKIETILLMNNETDKAFKVNQFRKTLRHVKNIVLRRKNKERSLYDLTDKEDNVKPKTIVFESFGGKNYSDSPKYIYEYMQKYYPNYRYIWSFKNPDKNVVPGSAEKVKRNSAEYYQAYSEASHWVSNARTPLYLNKKENQTYIQTWHGTPLKRLANDMKVVRMPGTTTPKYKRNFNRETSRWDYLISPNRYSTEIFRSAFWMDEERILEIGYPRNDVLVNRANDQEYLDEIRTHLNLPSDKKVIMYAPTWRDDEFVSKGKYLFELKIDLDNLYKELGDDYVILLRMHYLISNALDLSGYENFAIDVSNYNDVSELFLISDCLITDYSSVMFDYGILKRPQFFFAYDIDKYDKGLRGFYMNYMEDLPGPIYTEPYGLAKELKNLDKVQQQYQEKIDAFYDRFCSVDNGKASQYIGDLIHKDIKEQ.

Residues tryptophan 443–proline 447, arginine 511, proline 545–threonine 546, arginine 582–histidine 584, serine 624–serine 625, and aspartate 629 contribute to the CDP-glycerol site.

The protein belongs to the CDP-glycerol glycerophosphotransferase family.

The protein localises to the cell membrane. The catalysed reaction is 4-O-[(2R)-glycerylphospho]-N-acetyl-beta-D-mannosaminyl-(1-&gt;4)-N-acetyl-alpha-D-glucosaminyl di-trans,octa-cis-undecaprenyl diphosphate + n CDP-glycerol = 4-O-{[(2R)-1-glycerylphospho](n)-(2R)-1-glycerylphospho}-N-acetyl-beta-D-mannosaminyl-(1-&gt;4)-N-acetyl-alpha-D-glucosaminyl undecaprenyl diphosphate + n CMP + n H(+). It functions in the pathway cell wall biogenesis; poly(glycerol phosphate) teichoic acid biosynthesis. In terms of biological role, responsible for the polymerization of the main chain of the major teichoic acid by sequential transfer of glycerol phosphate units from CDP-glycerol to the disaccharide linkage unit. Synthesizes polymers of approximately 35 glycerol phosphate units in length. The protein is Teichoic acid poly(glycerol phosphate) polymerase of Staphylococcus epidermidis (strain ATCC 35984 / DSM 28319 / BCRC 17069 / CCUG 31568 / BM 3577 / RP62A).